The primary structure comprises 78 residues: Probable [Fe-S]-dependent transcriptional repressor (78 aa).

The iron-sulfur cluster site is built by C56, C61, C64, and C70.

Belongs to the FeoC family.

Functionally, may function as a transcriptional regulator that controls feoABC expression. The chain is Probable [Fe-S]-dependent transcriptional repressor from Escherichia fergusonii (strain ATCC 35469 / DSM 13698 / CCUG 18766 / IAM 14443 / JCM 21226 / LMG 7866 / NBRC 102419 / NCTC 12128 / CDC 0568-73).